Reading from the N-terminus, the 448-residue chain is Glutamyl-tRNA reductase (448 aa).

Substrate contacts are provided by residues 49–52 (TCNR), Ser-109, 114–116 (ETQ), and Gln-120. Residue Cys-50 is the Nucleophile of the active site. 189–194 (GAGEMG) provides a ligand contact to NADP(+).

Belongs to the glutamyl-tRNA reductase family. In terms of assembly, homodimer.

It carries out the reaction (S)-4-amino-5-oxopentanoate + tRNA(Glu) + NADP(+) = L-glutamyl-tRNA(Glu) + NADPH + H(+). The protein operates within porphyrin-containing compound metabolism; protoporphyrin-IX biosynthesis; 5-aminolevulinate from L-glutamyl-tRNA(Glu): step 1/2. Functionally, catalyzes the NADPH-dependent reduction of glutamyl-tRNA(Glu) to glutamate 1-semialdehyde (GSA). This Staphylococcus epidermidis (strain ATCC 12228 / FDA PCI 1200) protein is Glutamyl-tRNA reductase.